The following is a 336-amino-acid chain: F420-dependent glucose-6-phosphate dehydrogenase (336 aa).

Asp-39 is a coenzyme F420-(gamma-Glu)n binding site. His-40 (proton donor) is an active-site residue. Coenzyme F420-(gamma-Glu)n contacts are provided by residues Thr-76 and 107–108 (TG). Glu-109 serves as the catalytic Proton acceptor. Coenzyme F420-(gamma-Glu)n-binding positions include Asn-112, 177-178 (GG), and 180-181 (QV). Substrate-binding residues include Thr-195, Lys-198, Lys-259, and Arg-283.

It belongs to the F420-dependent glucose-6-phosphate dehydrogenase family. As to quaternary structure, homodimer.

The catalysed reaction is oxidized coenzyme F420-(gamma-L-Glu)(n) + D-glucose 6-phosphate + H(+) = 6-phospho-D-glucono-1,5-lactone + reduced coenzyme F420-(gamma-L-Glu)(n). Functionally, catalyzes the coenzyme F420-dependent oxidation of glucose 6-phosphate (G6P) to 6-phosphogluconolactone. Appears to have a role in resistance to oxidative stress, via its consumption of G6P that serves as a source of reducing power to combat oxidative stress in mycobacteria. The chain is F420-dependent glucose-6-phosphate dehydrogenase from Mycolicibacterium gilvum (strain PYR-GCK) (Mycobacterium gilvum (strain PYR-GCK)).